The chain runs to 229 residues: Small ribosomal subunit protein uS2c (229 aa).

It belongs to the universal ribosomal protein uS2 family.

It localises to the plastid. The protein resides in the chloroplast. The polypeptide is Small ribosomal subunit protein uS2c (rps2) (Emiliania huxleyi (Coccolithophore)).